The following is a 255-amino-acid chain: 3-deoxy-manno-octulosonate cytidylyltransferase (255 aa).

It belongs to the KdsB family.

It is found in the cytoplasm. The enzyme catalyses 3-deoxy-alpha-D-manno-oct-2-ulosonate + CTP = CMP-3-deoxy-beta-D-manno-octulosonate + diphosphate. Its pathway is nucleotide-sugar biosynthesis; CMP-3-deoxy-D-manno-octulosonate biosynthesis; CMP-3-deoxy-D-manno-octulosonate from 3-deoxy-D-manno-octulosonate and CTP: step 1/1. It functions in the pathway bacterial outer membrane biogenesis; lipopolysaccharide biosynthesis. In terms of biological role, activates KDO (a required 8-carbon sugar) for incorporation into bacterial lipopolysaccharide in Gram-negative bacteria. In Thermodesulfovibrio yellowstonii (strain ATCC 51303 / DSM 11347 / YP87), this protein is 3-deoxy-manno-octulosonate cytidylyltransferase.